The sequence spans 555 residues: Vacuolar fusion protein MON1 homolog A (555 aa).

The span at 1-12 (MAADMQRKRSSE) shows a compositional bias: basic and acidic residues. The disordered stretch occupies residues 1–90 (MAADMQRKRS…PPLATDMRQI (90 aa)). A phosphoserine mark is found at S31 and S56. Phosphothreonine is present on T61. Position 91 is a phosphoserine (S91). Residues 112 to 149 (MLPGSSEDWPESPGAARRPATEPPRDGAGEGDEEEAAE) are disordered. A compositionally biased stretch (basic and acidic residues) spans 130–139 (PATEPPRDGA).

The protein belongs to the MON1/SAND family. Interacts with CCZ1. Found in a complex with RMC1, CCZ1, MON1A and MON1B. The MON1A-CCZ1B complex interacts with RIMOC1. The MON1A-CCZ1B complex interacts with RAB7A and this interaction is enhanced in the presence of RIMOC1.

Functionally, plays an important role in membrane trafficking through the secretory apparatus. Not involved in endocytic trafficking to lysosomes. Acts in concert with CCZ1, as a guanine exchange factor (GEF) for RAB7, promotes the exchange of GDP to GTP, converting it from an inactive GDP-bound form into an active GTP-bound form. The polypeptide is Vacuolar fusion protein MON1 homolog A (MON1A) (Bos taurus (Bovine)).